A 416-amino-acid polypeptide reads, in one-letter code: Serine/threonine transporter SstT (416 aa).

A run of 9 helical transmembrane segments spans residues 15–35, 49–69, 82–102, 141–161, 192–212, 217–237, 288–308, 316–336, and 363–383; these read SLVSQILVGLVFGILLAMFMP, VGALKAVAPLLVFVLVMAAII, ILLLYLLGTFLAAAVAVVASF, ALLDANYIGILAWAIGLGIAM, LGILGLVASTLAETGFDALFG, LVVLIGCMLFIAFVVNPLIVF, VSIPLGATINMAGAAITITVL, LGMEVDLATAILLSVVATISA, and IAMQVVAVGFIIGVLQDSAET.

The protein belongs to the dicarboxylate/amino acid:cation symporter (DAACS) (TC 2.A.23) family.

It localises to the cell inner membrane. It catalyses the reaction L-serine(in) + Na(+)(in) = L-serine(out) + Na(+)(out). It carries out the reaction L-threonine(in) + Na(+)(in) = L-threonine(out) + Na(+)(out). Involved in the import of serine and threonine into the cell, with the concomitant import of sodium (symport system). The sequence is that of Serine/threonine transporter SstT from Aeromonas hydrophila subsp. hydrophila (strain ATCC 7966 / DSM 30187 / BCRC 13018 / CCUG 14551 / JCM 1027 / KCTC 2358 / NCIMB 9240 / NCTC 8049).